Consider the following 253-residue polypeptide: Peptidase inhibitor R3HDML (253 aa).

The first 24 residues, 1–24 (MPLLPSTVGLAGLLFWAGQAVNAL), serve as a signal peptide directing secretion. The propeptide occupies 25-56 (IMPNATPAPAQPESTAMRLLSGLEVPRYRRKR). The 141-residue stretch at 67–207 (LDYHNHIRAS…HRAAYLVCNY (141 aa)) folds into the SCP domain. N-linked (GlcNAc...) asparagine glycosylation is present at N120.

This sequence belongs to the CRISP family.

It localises to the secreted. Functionally, putative serine protease inhibitor. The sequence is that of Peptidase inhibitor R3HDML (R3HDML) from Homo sapiens (Human).